A 142-amino-acid chain; its full sequence is Transcription antitermination protein NusB (142 aa).

Belongs to the NusB family.

Involved in transcription antitermination. Required for transcription of ribosomal RNA (rRNA) genes. Binds specifically to the boxA antiterminator sequence of the ribosomal RNA (rrn) operons. In Persephonella marina (strain DSM 14350 / EX-H1), this protein is Transcription antitermination protein NusB.